Consider the following 158-residue polypeptide: NADH-quinone oxidoreductase subunit B (158 aa).

Residues cysteine 36, cysteine 37, cysteine 101, and cysteine 131 each contribute to the [4Fe-4S] cluster site.

The protein belongs to the complex I 20 kDa subunit family. In terms of assembly, NDH-1 is composed of 14 different subunits. Subunits NuoB, C, D, E, F, and G constitute the peripheral sector of the complex. It depends on [4Fe-4S] cluster as a cofactor.

Its subcellular location is the cell inner membrane. It carries out the reaction a quinone + NADH + 5 H(+)(in) = a quinol + NAD(+) + 4 H(+)(out). NDH-1 shuttles electrons from NADH, via FMN and iron-sulfur (Fe-S) centers, to quinones in the respiratory chain. The immediate electron acceptor for the enzyme in this species is believed to be ubiquinone. Couples the redox reaction to proton translocation (for every two electrons transferred, four hydrogen ions are translocated across the cytoplasmic membrane), and thus conserves the redox energy in a proton gradient. This Francisella philomiragia subsp. philomiragia (strain ATCC 25017 / CCUG 19701 / FSC 153 / O#319-036) protein is NADH-quinone oxidoreductase subunit B.